We begin with the raw amino-acid sequence, 61 residues long: MTQAKTFKVTLTKSLIGRKENHIASARGLGLRKINHTVEVLDTPENRGMANKIYYMVKIEG.

The protein belongs to the universal ribosomal protein uL30 family. In terms of assembly, part of the 50S ribosomal subunit.

The polypeptide is Large ribosomal subunit protein uL30 (Francisella philomiragia subsp. philomiragia (strain ATCC 25017 / CCUG 19701 / FSC 153 / O#319-036)).